The primary structure comprises 111 residues: Small ribosomal subunit protein bS16 (111 aa).

Belongs to the bacterial ribosomal protein bS16 family.

This is Small ribosomal subunit protein bS16 from Rickettsia felis (strain ATCC VR-1525 / URRWXCal2) (Rickettsia azadi).